Consider the following 149-residue polypeptide: Calmodulin-1 (149 aa).

An N-acetylalanine modification is found at alanine 2. EF-hand domains follow at residues aspartate 8 to asparagine 43, proline 44 to aspartate 79, aspartate 81 to lysine 116, and leucine 117 to lysine 149. Ca(2+) contacts are provided by aspartate 21, aspartate 23, aspartate 25, cysteine 27, glutamate 32, aspartate 57, aspartate 59, asparagine 61, threonine 63, glutamate 68, aspartate 94, aspartate 96, asparagine 98, and glutamate 105. Lysine 116 carries the N6,N6,N6-trimethyllysine modification. Ca(2+)-binding residues include aspartate 130, aspartate 132, aspartate 134, glutamine 136, and glutamate 141.

The protein belongs to the calmodulin family.

Its function is as follows. Calmodulin mediates the control of a large number of enzymes, ion channels and other proteins by Ca(2+). Among the enzymes to be stimulated by the calmodulin-Ca(2+) complex are a number of protein kinases and phosphatases. The polypeptide is Calmodulin-1 (CAM81) (Petunia hybrida (Petunia)).